A 482-amino-acid chain; its full sequence is O-methyltransferase tpcA (482 aa).

S-adenosyl-L-methionine contacts are provided by residues 293–294, D316, 348–349, and R364; these read GG and SF. H368 (proton acceptor) is an active-site residue.

Belongs to the class I-like SAM-binding methyltransferase superfamily. Cation-independent O-methyltransferase family. Specifically expressed in conidia.

It participates in secondary metabolite biosynthesis. Its function is as follows. O-methyltransferase; part of the gene cluster that mediates the biosynthesis of trypacidin, a mycotoxin with antiprotozoal activity and that plays a role in the infection process. The pathway begins with the synthesis of atrochrysone thioester by the polyketide synthase (PKS) tpcC. The atrochrysone carboxyl ACP thioesterase tpcB then breaks the thioester bond and releases the atrochrysone carboxylic acid from tpcC. The decarboxylase tpcK converts atrochrysone carboxylic acid to atrochrysone which is further reduced into emodin anthrone. The next step is performed by the emodin anthrone oxygenase tpcL that catalyzes the oxidation of emodinanthrone to emodin. Emodin O-methyltransferase encoded by tpcA catalyzes methylation of the 8-hydroxy group of emodin to form questin. Ring cleavage of questin by questin oxidase tpcI leads to desmethylsulochrin via several intermediates including questin epoxide. Another methylation step catalyzed by tpcM leads to the formation of sulochrin which is further converted to monomethylsulfochrin by tpcH. Finally, the tpcJ catalyzes the conversion of monomethylsulfochrin to trypacidin. Trypacidin is toxic for human pulmonary and bronchial epithelial cells by initiating the intracellular formation of nitric oxide (NO) and hydrogen peroxide (H(2)O(2)), thus triggering host necrotic cell death. The trypacidin pathway is also able to produce endocrocin via a distinct route from the endocrocin Enc pathway. In Aspergillus fumigatus (strain ATCC MYA-4609 / CBS 101355 / FGSC A1100 / Af293) (Neosartorya fumigata), this protein is O-methyltransferase tpcA.